A 112-amino-acid polypeptide reads, in one-letter code: MLDEKSSNTTSVVVLCTAPDEATAQDLAAKVLAEKLAACATLIPGATSLYYWEGKLEQEYEVQMILKTTVSHQQALLECLKSHHPYQTPELLVLPVTHGDTDYLSWLNASLR.

Cu cation is bound by residues Cys-16, His-83, and His-84.

Belongs to the CutA family. In terms of assembly, homotrimer. Requires Cu cation as cofactor.

It is found in the cytoplasm. Its function is as follows. Involved in resistance toward heavy metals. This chain is Divalent-cation tolerance protein CutA, found in Shigella flexneri.